A 351-amino-acid polypeptide reads, in one-letter code: Very-long-chain 3-oxoacyl-CoA reductase (351 aa).

The chain crosses the membrane as a helical span at residues Leu-26–Ile-46. NADP(+) is bound by residues Leu-72, Asp-126, Asn-153, Tyr-225, Lys-229, Val-258, and Ser-260. Residue Tyr-225 is the Proton donor of the active site. Residue Lys-229 is the Lowers pKa of active site Tyr of the active site.

This sequence belongs to the short-chain dehydrogenases/reductases (SDR) family.

Its subcellular location is the endoplasmic reticulum membrane. The catalysed reaction is a very-long-chain (3R)-3-hydroxyacyl-CoA + NADP(+) = a very-long-chain 3-oxoacyl-CoA + NADPH + H(+). It functions in the pathway lipid metabolism; fatty acid biosynthesis. Functionally, component of the microsomal membrane bound fatty acid elongation system, which produces the 26-carbon very long-chain fatty acids (VLCFA) from palmitate. Catalyzes the reduction of the 3-ketoacyl-CoA intermediate that is formed in each cycle of fatty acid elongation. VLCFAs serve as precursors for ceramide and sphingolipids. This chain is Very-long-chain 3-oxoacyl-CoA reductase, found in Eremothecium gossypii (strain ATCC 10895 / CBS 109.51 / FGSC 9923 / NRRL Y-1056) (Yeast).